The following is a 396-amino-acid chain: NADH-quinone oxidoreductase subunit D 1 (396 aa).

This sequence belongs to the complex I 49 kDa subunit family. NDH-1 is composed of 14 different subunits. Subunits NuoB, C, D, E, F, and G constitute the peripheral sector of the complex.

The protein resides in the cell inner membrane. It catalyses the reaction a quinone + NADH + 5 H(+)(in) = a quinol + NAD(+) + 4 H(+)(out). NDH-1 shuttles electrons from NADH, via FMN and iron-sulfur (Fe-S) centers, to quinones in the respiratory chain. The immediate electron acceptor for the enzyme in this species is believed to be ubiquinone. Couples the redox reaction to proton translocation (for every two electrons transferred, four hydrogen ions are translocated across the cytoplasmic membrane), and thus conserves the redox energy in a proton gradient. This Rhizobium etli (strain CIAT 652) protein is NADH-quinone oxidoreductase subunit D 1.